A 256-amino-acid chain; its full sequence is Small ribosomal subunit protein eS1 (256 aa).

Over residues 1–18 (MAVGKNKRLSKGKKGLKK) the composition is skewed to basic residues. A disordered region spans residues 1–20 (MAVGKNKRLSKGKKGLKKKA). Ala2 carries the post-translational modification N-acetylalanine; partial.

This sequence belongs to the eukaryotic ribosomal protein eS1 family. As to quaternary structure, component of the small ribosomal subunit. Mature ribosomes consist of a small (40S) and a large (60S) subunit. The 40S subunit contains about 33 different proteins and 1 molecule of RNA (18S). The 60S subunit contains about 49 different proteins and 3 molecules of RNA (25S, 5.8S and 5S).

Its subcellular location is the cytoplasm. The sequence is that of Small ribosomal subunit protein eS1 from Podospora anserina (strain S / ATCC MYA-4624 / DSM 980 / FGSC 10383) (Pleurage anserina).